Here is a 61-residue protein sequence, read N- to C-terminus: Large ribosomal subunit protein uL30 (61 aa).

It belongs to the universal ribosomal protein uL30 family. As to quaternary structure, part of the 50S ribosomal subunit.

The protein is Large ribosomal subunit protein uL30 of Mycobacterium sp. (strain KMS).